The chain runs to 689 residues: MGTSQAVDSSPPDGTGVIQLDPWLEPFRDALKQRFSFIEGWVKAINETEGGLETFSKGYERFGLNVQSNGDIIYREWAPNAVQAQLVGEFNNWDVTAHPMTKNGFGVWEVTVPAVNGAPAIPHDSKIKISMVIPSGERIYRIPAWIKRVVQDLSVSPTYEAVFWNPPTEKQYKFQYSRPKRPESLRIYEAHVGISSPETKVATYKEFTSNMLPRIKYLGYNAIQLMAIMEHAYYASFGYQVNNFFAASSRYGTPEDLKELVDKAHSMGLVVLLDVVHSHASKNVLDGLNMFDGTDHLYFHGGGKGRHELWDSRLFNYGHHEVLRFLLSNLRFWMEEYGFDGFRFDGVTSMLYTHHGIGTGFSGGYHEYFGSSVDEEGVMYLTLANEMLHNLYPNCITVAEDVSGMPALCLPHSLGGVGFDYRLAMAVPDMYIKLLKEKKDDEWDIGNLSFTLTNRRHGEKTIAYAESHDQALVGDKTLMMWLCDKEMYTHMSVLTEFTPIIERGMALHKLIRLVTHGLGGEGYLNFEGNEFGHPEWLDFPRDGNNNSFWYARRQLNLTEDHLLRYKFLNDFDRAMQLTEEKYGWLHSPQAYVSLKNETDKVLVFERAGLLWIFNFHPTNSFTDYRVGVEQSGTYRIVLDTDDPAFGGLNRNLKETRFFTTDLSWNGRSNFLQVYIPTRTALVLALEETL.

Positions 93 and 128 each coordinate (1,4-alpha-D-glucosyl)n. D345 functions as the Nucleophile in the catalytic mechanism. E400 serves as the catalytic Proton donor.

It belongs to the glycosyl hydrolase 13 family. GlgB subfamily.

The protein localises to the cytoplasm. The catalysed reaction is Transfers a segment of a (1-&gt;4)-alpha-D-glucan chain to a primary hydroxy group in a similar glucan chain.. The protein operates within glycan biosynthesis; glycogen biosynthesis. Its function is as follows. Glycogen-branching enzyme participates in the glycogen biosynthetic process along with glycogenin and glycogen synthase. Generates alpha-1,6-glucosidic branches from alpha-1,4-linked glucose chains, to increase solubility of the glycogen polymer. This is 1,4-alpha-glucan-branching enzyme (gbeA) from Aspergillus oryzae (strain ATCC 42149 / RIB 40) (Yellow koji mold).